The following is a 572-amino-acid chain: Methionine--tRNA ligase (572 aa).

The 'HIGH' region signature appears at 11-21; the sequence is PYINGIKHLGN. The Zn(2+) site is built by cysteine 143, cysteine 146, cysteine 156, and cysteine 159. The 'KMSKS' region signature appears at 346 to 350; the sequence is QFSTS. Threonine 349 serves as a coordination point for ATP.

This sequence belongs to the class-I aminoacyl-tRNA synthetase family. MetG type 1 subfamily. As to quaternary structure, monomer. Zn(2+) serves as cofactor.

The protein resides in the cytoplasm. The enzyme catalyses tRNA(Met) + L-methionine + ATP = L-methionyl-tRNA(Met) + AMP + diphosphate. Is required not only for elongation of protein synthesis but also for the initiation of all mRNA translation through initiator tRNA(fMet) aminoacylation. This chain is Methionine--tRNA ligase, found in Roseobacter denitrificans (strain ATCC 33942 / OCh 114) (Erythrobacter sp. (strain OCh 114)).